Reading from the N-terminus, the 503-residue chain is D-xylose-proton symporter-like 2 (503 aa).

The segment covering 1-15 (MALDPEQQQPISSVS) has biased composition (polar residues). The tract at residues 1-32 (MALDPEQQQPISSVSREFGKSSGEISPEREPL) is disordered. Ala-2 is subject to N-acetylalanine. Ser-26 bears the Phosphoserine mark. 12 helical membrane passes run 42–62 (YSVVAAILPFLFPALGGLLYG), 99–119 (GSLYGALFGSIVAFTIADVIG), 124–144 (LILAALLYLVGALVTALAPTY), 146–166 (VLIIGRVIYGVSVGLAMHAAP), 187–207 (FFIVLGMVGGYGIGSLTVNVH), 213–233 (MYATSVPLAVIMGIGMWWLPA), 305–325 (ALIIGGGLVLFQQITGQPSVL), 346–366 (VSILLGLLKLIMTGVAVVVID), 375–395 (LGGVGGMVVSLFLLGSYYLFF), 400–420 (VVAVVALLLYVGCYQLSFGPI), 437–457 (GLSLAVLVNFGANALVTFAFS), and 467–487 (ILFCGFGVICVLSLVFIFFIV).

This sequence belongs to the major facilitator superfamily. Sugar transporter (TC 2.A.1.1) family.

The protein localises to the membrane. The polypeptide is D-xylose-proton symporter-like 2 (Arabidopsis thaliana (Mouse-ear cress)).